The following is a 247-amino-acid chain: E3 ubiquitin-protein ligase RNF182 (247 aa).

The RING-type zinc-finger motif lies at 20-68; it reads CKICYNRYNLKQRKPKVLECCHRVCAKCLYKIIDFGDSPQGVIVCPFCR. 2 consecutive transmembrane segments (helical) span residues 184-204 and 211-231; these read VLVW…IYLL and LGVV…VYGF.

In terms of assembly, interacts with ATP6V0C. In terms of tissue distribution, up-regulated in neuronal cells subjected to cell death-inducing injuries, such as oxygen and glucose deprivation (at protein level). Could be up-regulated in Alzheimer disease brains. Highly expressed in innate immune organs such as lymph nodes and spleen and in immune cells such as macrophages and dendritic cells.

The protein resides in the membrane. It localises to the cytoplasm. The enzyme catalyses S-ubiquitinyl-[E2 ubiquitin-conjugating enzyme]-L-cysteine + [acceptor protein]-L-lysine = [E2 ubiquitin-conjugating enzyme]-L-cysteine + N(6)-ubiquitinyl-[acceptor protein]-L-lysine.. It functions in the pathway protein modification; protein ubiquitination. In terms of biological role, E3 ubiquitin-protein ligase that mediates the ubiquitination of ATP6V0C and targets it to degradation via the ubiquitin-proteasome pathway. Also plays a role in the inhibition of TLR-triggered innate immune response by mediating 'Lys'-48-linked ubiquitination and subsequent degradation of NF-kappa-B component RELA. The protein is E3 ubiquitin-protein ligase RNF182 (RNF182) of Homo sapiens (Human).